We begin with the raw amino-acid sequence, 556 residues long: 3-phosphoinositide-dependent protein kinase 1 (556 aa).

The residue at position 9 (Tyr-9) is a Phosphotyrosine; by SRC and INSR. At Ser-25 the chain carries Phosphoserine. The disordered stretch occupies residues 26-80; that stretch reads PSMVRTQTESSTPPGIPGGSRQGPAMDGTAAEPRPGAGSLQHAQPPPQPRKKRPE. The segment covering 28 to 38 has biased composition (polar residues); it reads MVRTQTESSTP. A Protein kinase domain is found at 82–342; it reads FKFGKILGEG…YGPLKAHPFF (261 aa). Residues 92–94 and Lys-111 each bind ATP; that span reads SFS. The tract at residues 113–157 is PIF-pocket; sequence LEKRHIIKENKVPYVTRERDVMSRLDHPFFVKLYFTFQDDEKLYF. Residues 160 to 162 and Glu-166 contribute to the ATP site; that span reads SYA. Asp-205 functions as the Proton acceptor in the catalytic mechanism. ATP is bound by residues Glu-209 and Asp-223. Ser-241 carries the phosphoserine; by autocatalysis modification. N6-acetyllysine is present on Lys-304. Position 354 is a phosphothreonine; by MELK (Thr-354). Tyr-373 and Tyr-376 each carry phosphotyrosine; by SRC and INSR. At Ser-393 the chain carries Phosphoserine. Position 394 is a phosphoserine; by MAP3K5 (Ser-394). At Ser-396 the chain carries Phosphoserine. At Ser-398 the chain carries Phosphoserine; by MAP3K5. Ser-410 bears the Phosphoserine mark. Residues 459–550 form the PH domain; that stretch reads KMGPVDKRKG…EVWRQRYQSH (92 aa). Ser-501 carries the phosphoserine; by PKC/PRKCQ modification. Residue Thr-513 is modified to Phosphothreonine; by autocatalysis. Position 529 is a phosphoserine; by PKC/PRKCQ (Ser-529).

It belongs to the protein kinase superfamily. AGC Ser/Thr protein kinase family. PDPK1 subfamily. In terms of assembly, homodimer in its autoinhibited state. Active as monomer. Interacts with NPRL2, PPARG, PAK1, PTK2B, GRB14, PKN1 (via C-terminus), STRAP and IKKB. The Tyr-9 phosphorylated form interacts with SRC, RASA1 and CRK (via their SH2 domains). Interacts with SGK3 in a phosphorylation-dependent manner. The tyrosine-phosphorylated form interacts with PTPN6. The Ser-241 phosphorylated form interacts with YWHAH and YWHAQ. Binds INSR in response to insulin. Interacts (via PH domain) with SMAD3, SMAD4 and SMAD7. Interacts with PKN2; the interaction stimulates PDPK1 autophosphorylation, its PI(3,4,5)P3-dependent kinase activity toward 'Ser-473' of AKT1 but also activates its kinase activity toward PRKCD and PRKCZ. Post-translationally, phosphorylation on Ser-241 in the activation loop is required for full activity. PDPK1 itself can autophosphorylate Ser-241, leading to its own activation. Autophosphorylation is inhibited by the apoptotic C-terminus cleavage product of PKN2. Tyr-9 phosphorylation is critical for stabilization of both PDPK1 and the PDPK1/SRC complex via HSP90-mediated protection of PDPK1 degradation. Angiotensin II stimulates the tyrosine phosphorylation of PDPK1 in vascular smooth muscle in a calcium- and SRC-dependent manner. Phosphorylated on Tyr-9, Tyr-373 and Tyr-376 by INSR in response to insulin. Palmitate negatively regulates autophosphorylation at Ser-241 and palmitate-induced phosphorylation at Ser-529 and Ser-501 by PKC/PRKCQ negatively regulates its ability to phosphorylate PKB/AKT1. Phosphorylation at Thr-354 by MELK partially inhibits kinase activity, the inhibition is cooperatively enhanced by phosphorylation at Ser-394 and Ser-398 by MAP3K5. Autophosphorylated; autophosphorylation is inhibited by the apoptotic C-terminus cleavage product of PKN2. In terms of processing, monoubiquitinated in the kinase domain, deubiquitinated by USP4. Appears to be expressed ubiquitously. The Tyr-9 phosphorylated form is markedly increased in diseased tissue compared with normal tissue from lung, liver, colon and breast.

The protein resides in the cytoplasm. It is found in the nucleus. The protein localises to the cell membrane. It localises to the cell junction. Its subcellular location is the focal adhesion. The catalysed reaction is L-seryl-[protein] + ATP = O-phospho-L-seryl-[protein] + ADP + H(+). The enzyme catalyses L-threonyl-[protein] + ATP = O-phospho-L-threonyl-[protein] + ADP + H(+). Its activity is regulated as follows. Homodimerization regulates its activity by maintaining the kinase in an autoinhibitory conformation. NPRL2 down-regulates its activity by interfering with tyrosine phosphorylation at the Tyr-9, Tyr-373 and Tyr-376 residues. The 14-3-3 protein YWHAQ acts as a negative regulator by association with the residues surrounding the Ser-241 residue. STRAP positively regulates its activity by enhancing its autophosphorylation and by stimulating its dissociation from YWHAQ. SMAD2, SMAD3, SMAD4 and SMAD7 also positively regulate its activity by stimulating its dissociation from YWHAQ. Activated by phosphorylation on Tyr-9, Tyr-373 and Tyr-376 by INSR in response to insulin. Serine/threonine kinase which acts as a master kinase, phosphorylating and activating a subgroup of the AGC family of protein kinases. Its targets include: protein kinase B (PKB/AKT1, PKB/AKT2, PKB/AKT3), p70 ribosomal protein S6 kinase (RPS6KB1), p90 ribosomal protein S6 kinase (RPS6KA1, RPS6KA2 and RPS6KA3), cyclic AMP-dependent protein kinase (PRKACA), protein kinase C (PRKCD and PRKCZ), serum and glucocorticoid-inducible kinase (SGK1, SGK2 and SGK3), p21-activated kinase-1 (PAK1), TSSK3, protein kinase PKN (PKN1 and PKN2). Plays a central role in the transduction of signals from insulin by providing the activating phosphorylation to PKB/AKT1, thus propagating the signal to downstream targets controlling cell proliferation and survival, as well as glucose and amino acid uptake and storage. Negatively regulates the TGF-beta-induced signaling by: modulating the association of SMAD3 and SMAD7 with TGF-beta receptor, phosphorylating SMAD2, SMAD3, SMAD4 and SMAD7, preventing the nuclear translocation of SMAD3 and SMAD4 and the translocation of SMAD7 from the nucleus to the cytoplasm in response to TGF-beta. Activates PPARG transcriptional activity and promotes adipocyte differentiation. Activates the NF-kappa-B pathway via phosphorylation of IKKB. The tyrosine phosphorylated form is crucial for the regulation of focal adhesions by angiotensin II. Controls proliferation, survival, and growth of developing pancreatic cells. Participates in the regulation of Ca(2+) entry and Ca(2+)-activated K(+) channels of mast cells. Essential for the motility of vascular endothelial cells (ECs) and is involved in the regulation of their chemotaxis. Plays a critical role in cardiac homeostasis by serving as a dual effector for cell survival and beta-adrenergic response. Plays an important role during thymocyte development by regulating the expression of key nutrient receptors on the surface of pre-T cells and mediating Notch-induced cell growth and proliferative responses. Provides negative feedback inhibition to toll-like receptor-mediated NF-kappa-B activation in macrophages. Functionally, catalytically inactive. The chain is 3-phosphoinositide-dependent protein kinase 1 (PDPK1) from Homo sapiens (Human).